The sequence spans 482 residues: MTPARVLAVASEVYPIVKTGGLADVAGALPIALKAHGVEMRTLMPGYPDVMRLLSGAEEIRRWPDYFGGPGRLLAGAHDGLDLFVLDVPHLYARPGNPYVTTEGVDWPDNGVRFAALSRVAADIGHGLVPAFVPDIVHAHDWQAGLAPAYLHYDNRPRPGTVMTIHNMAYQGKFAPELIGAIGLPWSSFDVNGLEYFGGISFLKAGLQFADRITTVSPTYAREIQSDEGGMGLGGLLRARAGALSGILNGIDIAVWNPQTDSHIAYRFGAEDLTFRAANKAVLQQQFNLDSSDEAPLLGVISRLSWQKGLDLLLEAIPTILGEGMQLALLGSGDRDLQDRYQAAARANPGRIGVVIGYDEILAHLIQAGSDALIVPSRFEPCGLTQLCALRYGAVPIVSRVGGLEDTIVDIGEAGREATGFKFGPVTADALAGTLRKANTAFHDKLTWRQLQRNGLATDVSWRSRAGDYAALYRSLIESRRA.

Residue lysine 18 coordinates ADP-alpha-D-glucose.

This sequence belongs to the glycosyltransferase 1 family. Bacterial/plant glycogen synthase subfamily.

The enzyme catalyses [(1-&gt;4)-alpha-D-glucosyl](n) + ADP-alpha-D-glucose = [(1-&gt;4)-alpha-D-glucosyl](n+1) + ADP + H(+). It functions in the pathway glycan biosynthesis; glycogen biosynthesis. Its function is as follows. Synthesizes alpha-1,4-glucan chains using ADP-glucose. This is Glycogen synthase 2 from Bradyrhizobium diazoefficiens (strain JCM 10833 / BCRC 13528 / IAM 13628 / NBRC 14792 / USDA 110).